A 190-amino-acid polypeptide reads, in one-letter code: Probable molybdenum cofactor guanylyltransferase (190 aa).

Residues 9 to 11, Lys21, Asp65, and Asp94 each bind GTP; that span reads LCG. Asp94 is a binding site for Mg(2+).

It belongs to the MobA family. Mg(2+) serves as cofactor.

The protein resides in the cytoplasm. The enzyme catalyses Mo-molybdopterin + GTP + H(+) = Mo-molybdopterin guanine dinucleotide + diphosphate. Functionally, transfers a GMP moiety from GTP to Mo-molybdopterin (Mo-MPT) cofactor (Moco or molybdenum cofactor) to form Mo-molybdopterin guanine dinucleotide (Mo-MGD) cofactor. In Flavobacterium johnsoniae (strain ATCC 17061 / DSM 2064 / JCM 8514 / BCRC 14874 / CCUG 350202 / NBRC 14942 / NCIMB 11054 / UW101) (Cytophaga johnsonae), this protein is Probable molybdenum cofactor guanylyltransferase.